Here is a 460-residue protein sequence, read N- to C-terminus: Ribosomal protein uS12 methylthiotransferase RimO (460 aa).

One can recognise an MTTase N-terminal domain in the interval 9-119 (PKVGFVSLGC…VMEAVHAALP (111 aa)). [4Fe-4S] cluster-binding residues include Cys18, Cys54, Cys83, Cys150, Cys154, and Cys157. One can recognise a Radical SAM core domain in the interval 136–374 (LTPRHYAYLK…AKQAEISALR (239 aa)). In terms of domain architecture, TRAM spans 376-444 (EAKIGSVQQC…EHDLFGDALP (69 aa)).

The protein belongs to the methylthiotransferase family. RimO subfamily. The cofactor is [4Fe-4S] cluster.

The protein localises to the cytoplasm. The catalysed reaction is L-aspartate(89)-[ribosomal protein uS12]-hydrogen + (sulfur carrier)-SH + AH2 + 2 S-adenosyl-L-methionine = 3-methylsulfanyl-L-aspartate(89)-[ribosomal protein uS12]-hydrogen + (sulfur carrier)-H + 5'-deoxyadenosine + L-methionine + A + S-adenosyl-L-homocysteine + 2 H(+). Its function is as follows. Catalyzes the methylthiolation of an aspartic acid residue of ribosomal protein uS12. The chain is Ribosomal protein uS12 methylthiotransferase RimO from Xanthomonas oryzae pv. oryzae (strain PXO99A).